The following is a 195-amino-acid chain: Imidazoleglycerol-phosphate dehydratase (195 aa).

It belongs to the imidazoleglycerol-phosphate dehydratase family.

It is found in the cytoplasm. The catalysed reaction is D-erythro-1-(imidazol-4-yl)glycerol 3-phosphate = 3-(imidazol-4-yl)-2-oxopropyl phosphate + H2O. The protein operates within amino-acid biosynthesis; L-histidine biosynthesis; L-histidine from 5-phospho-alpha-D-ribose 1-diphosphate: step 6/9. In Campylobacter concisus (strain 13826), this protein is Imidazoleglycerol-phosphate dehydratase.